The primary structure comprises 431 residues: uncharacterized protein (431 aa).

The next 4 helical transmembrane spans lie at 228 to 248 (GLLSIPLTSSIIIYGFIHYLS), 279 to 299 (IGLPKIILYSNLATFCYNFTF), 349 to 369 (ILWPFVGKCTGGLLLNAFLWI), and 388 to 408 (MIFNIIGCGTAAIGWSSLKLY).

It localises to the membrane. This is an uncharacterized protein from Saccharomyces cerevisiae (strain ATCC 204508 / S288c) (Baker's yeast).